Consider the following 203-residue polypeptide: Endo-type membrane-bound lytic murein transglycosylase A (203 aa).

The first 15 residues, 1–15 (MKLRWFAFLIVLLAG), serve as a signal peptide directing secretion. Cys16 carries the N-palmitoyl cysteine lipid modification. The S-diacylglycerol cysteine moiety is linked to residue Cys16.

This sequence belongs to the transglycosylase Slt family.

The protein resides in the cell outer membrane. The catalysed reaction is Endolytic cleavage of the (1-&gt;4)-beta-glycosidic linkage between N-acetylmuramic acid (MurNAc) and N-acetylglucosamine (GlcNAc) residues in peptidoglycan with concomitant formation of a 1,6-anhydrobond in the MurNAc residue.. In terms of biological role, murein-degrading enzyme. May play a role in recycling of muropeptides during cell elongation and/or cell division. Preferentially cleaves at a distance of more than two disaccharide units from the ends of the glycan chain. The polypeptide is Endo-type membrane-bound lytic murein transglycosylase A (Escherichia coli O127:H6 (strain E2348/69 / EPEC)).